The sequence spans 251 residues: Hydroxyacylglutathione hydrolase (251 aa).

Zn(2+) is bound by residues histidine 53, histidine 55, aspartate 57, histidine 58, histidine 110, aspartate 127, and histidine 165.

Belongs to the metallo-beta-lactamase superfamily. Glyoxalase II family. In terms of assembly, monomer. The cofactor is Zn(2+).

The catalysed reaction is an S-(2-hydroxyacyl)glutathione + H2O = a 2-hydroxy carboxylate + glutathione + H(+). It functions in the pathway secondary metabolite metabolism; methylglyoxal degradation; (R)-lactate from methylglyoxal: step 2/2. Its function is as follows. Thiolesterase that catalyzes the hydrolysis of S-D-lactoyl-glutathione to form glutathione and D-lactic acid. This is Hydroxyacylglutathione hydrolase from Escherichia coli (strain UTI89 / UPEC).